We begin with the raw amino-acid sequence, 90 residues long: MAGFWSKIFGNDEKPSSAQTAKDRLKVIVASEQGLGRRLSQDKIDQMKKEIMQVVSRYVRGVDEDHIQMQVRSEANIEMLEMNINLPEER.

Positions 1-21 (MAGFWSKIFGNDEKPSSAQTA) are disordered. Residues 10–21 (GNDEKPSSAQTA) are compositionally biased toward basic and acidic residues.

It belongs to the MinE family.

Prevents the cell division inhibition by proteins MinC and MinD at internal division sites while permitting inhibition at polar sites. This ensures cell division at the proper site by restricting the formation of a division septum at the midpoint of the long axis of the cell. In Acinetobacter baylyi (strain ATCC 33305 / BD413 / ADP1), this protein is Cell division topological specificity factor.